The sequence spans 824 residues: U-box domain-containing protein 24 (824 aa).

The U-box domain maps to 13–92; the sequence is GAFEAFVCPL…HEWRARNEEK (80 aa). ARM repeat units lie at residues 133–172, 175–214, 217–258, 260–299, 300–339, 341–385, 396–435, 441–481, and 486–525; these read AASKDLVRRRGVLRAVAEMLKSGSRRLRLKSLQVLRVLVE, DDNKEELGKGDTIRTIIKFLSNEHVQERELAVSLLHELSG, PTCE…NLDR, DANVKQMADNGRLQPLLTRLLRGEPDTRVAMADYLGELAL, ANDDKAAVAEQAGPLLVGMLRTGATPAKEATLKALREISS, EASA…NLVA, DDDEDDDGGGGGRGRRRTLLSEDVVHSQLHLISNTGPAIG, VLAG…DIRV, and LLRNLAPYMGAELADALGGSLSSLLRAISSDGGGVTEEQA.

In terms of assembly, interacts with BZR1, BZR2, BZR3 and GSK2. Post-translationally, auto-ubiquitinated. In terms of processing, phosphorylated by GSK2. Phosphorylation of PUB24 increases its cellular stability.

The protein localises to the cytoplasm. It is found in the cytosol. Its subcellular location is the nucleus. It catalyses the reaction S-ubiquitinyl-[E2 ubiquitin-conjugating enzyme]-L-cysteine + [acceptor protein]-L-lysine = [E2 ubiquitin-conjugating enzyme]-L-cysteine + N(6)-ubiquitinyl-[acceptor protein]-L-lysine.. It functions in the pathway protein modification; protein ubiquitination. E3 ubiquitin-protein ligase that functions as a negative regulator of brassinosteroid (BR) signaling. Targets BZR1, a positive regulator of BR signaling pathway, and promotes its degradation via the ubiquitin-26S proteasome pathway. This chain is U-box domain-containing protein 24, found in Oryza sativa subsp. japonica (Rice).